The chain runs to 251 residues: Small ribosomal subunit protein uS2 (251 aa).

It belongs to the universal ribosomal protein uS2 family.

The chain is Small ribosomal subunit protein uS2 from Azoarcus sp. (strain BH72).